The following is a 248-amino-acid chain: HTH-type transcriptional regulator GgaR (248 aa).

An HTH gntR-type domain is found at 22-90 (TPLYIKFAET…RGYGTQINNI (69 aa)). Positions 50–69 (ERDLSQLTGVSRITVRKAMQ) form a DNA-binding region, H-T-H motif.

Senses ADP-glucose (ADPG), which is the substrate for glycogen elongation, as an effector. In the presence of ADPG, GgaR becomes inactive and derepresses the yegTUV operon, leading to glycogen accumulation. In contrast, in the absence of glucose, the concentration of ADPG decreases, GgaR becomes active, and glycogen accumulation is repressed. Functionally, transcriptional regulator that regulates glycogen accumulation in response to the amount of glucose available to the cell. Acts as a repressor of the yegTUV operon, which may be involved in glycogen accumulation. The sequence is that of HTH-type transcriptional regulator GgaR from Escherichia coli O6:H1 (strain CFT073 / ATCC 700928 / UPEC).